The primary structure comprises 545 residues: Glucans biosynthesis protein G (545 aa).

Positions 1 to 34 (MVSLLRCQSFKPSSSLICSLALSAAFALSSSAFA) are cleaved as a signal peptide. The interval 38–60 (KPAENKPATPVVSPPKATAQPAN) is disordered.

The protein belongs to the OpgD/OpgG family.

It localises to the periplasm. It functions in the pathway glycan metabolism; osmoregulated periplasmic glucan (OPG) biosynthesis. Functionally, involved in the biosynthesis of osmoregulated periplasmic glucans (OPGs). The sequence is that of Glucans biosynthesis protein G from Shewanella sp. (strain MR-4).